The following is a 144-amino-acid chain: 3-hydroxyacyl-[acyl-carrier-protein] dehydratase FabZ (144 aa).

H51 is a catalytic residue.

The protein belongs to the thioester dehydratase family. FabZ subfamily.

The protein resides in the cytoplasm. The enzyme catalyses a (3R)-hydroxyacyl-[ACP] = a (2E)-enoyl-[ACP] + H2O. Involved in unsaturated fatty acids biosynthesis. Catalyzes the dehydration of short chain beta-hydroxyacyl-ACPs and long chain saturated and unsaturated beta-hydroxyacyl-ACPs. The protein is 3-hydroxyacyl-[acyl-carrier-protein] dehydratase FabZ (fabZ1) of Enterococcus faecalis (strain ATCC 700802 / V583).